The sequence spans 519 residues: MPMPSRDGGLHPRHHHYGSHSPWSQLLSSPMETPSIKGLYYRRVRKVGALDASPVDLKKEILINVGGRRYLLPWSTLDRFPLSRLSKLRLCRSYEEIVQLCDDYDEDSQEFFFDRSPSAFGVIVSFLAAGKLVLLQEMCALSFQEELAYWGIEEAHLERCCLRKLLRKLEELEELAKLHREDVLRQQRETRRPASHSSRWGLCMNRLREMVENPQSGLPGKVFACLSILFVATTAVSLCVSTMPDLRAEEDQGECSRKCYYIFIVETICVAWFSLEFCLRFVQAQDKCQFFQGPLNIIDILAISPYYVSLAVSEEPPEDGERPSGSSYLEKVGLVLRVLRALRILYVMRLARHSLGLQTLGLTVRRCTREFGLLLLFLAVAITLFSPLVYVAEKESGRVLEFTSIPASYWWAIISMTTVGYGDMVPRSVPGQMVALSSILSGILIMAFPATSIFHTFSHSYLELKKEQEQLQARLRHLQNTGPASECELLDPHVASEHELMNDVNDLILEGPALPIMHM.

Positions 1 to 25 are disordered; it reads MPMPSRDGGLHPRHHHYGSHSPWSQ. Residues 1 to 218 lie on the Cytoplasmic side of the membrane; it reads MPMPSRDGGL…EMVENPQSGL (218 aa). A helical membrane pass occupies residues 219-240; sequence PGKVFACLSILFVATTAVSLCV. Over 241–261 the chain is Extracellular; it reads STMPDLRAEEDQGECSRKCYY. Residues 262–283 traverse the membrane as a helical segment; the sequence is IFIVETICVAWFSLEFCLRFVQ. The Cytoplasmic portion of the chain corresponds to 284–294; the sequence is AQDKCQFFQGP. Residues 295-314 form a helical membrane-spanning segment; sequence LNIIDILAISPYYVSLAVSE. Residues 315–328 are Extracellular-facing; sequence EPPEDGERPSGSSY. A helical; Voltage-sensor membrane pass occupies residues 329 to 353; it reads LEKVGLVLRVLRALRILYVMRLARH. The Cytoplasmic segment spans residues 354–368; that stretch reads SLGLQTLGLTVRRCT. The helical transmembrane segment at 369-390 threads the bilayer; the sequence is REFGLLLLFLAVAITLFSPLVY. The Extracellular portion of the chain corresponds to 391 to 405; the sequence is VAEKESGRVLEFTSI. The helical intramembrane region spans 406 to 417; the sequence is PASYWWAIISMT. The Selectivity filter motif lies at 418–423; sequence TVGYGD. The stretch at 418-425 is an intramembrane region; it reads TVGYGDMV. The Extracellular portion of the chain corresponds to 426-432; sequence PRSVPGQ. The chain crosses the membrane as a helical span at residues 433-461; that stretch reads MVALSSILSGILIMAFPATSIFHTFSHSY. Residues 462–519 lie on the Cytoplasmic side of the membrane; that stretch reads LELKKEQEQLQARLRHLQNTGPASECELLDPHVASEHELMNDVNDLILEGPALPIMHM.

This sequence belongs to the potassium channel family. G (TC 1.A.1.2) subfamily. Kv6.4/KCNG4 sub-subfamily. Heterotetramer with KCNB1. Does not form homomultimer. In terms of tissue distribution, highly expressed in brain, and at lower levels in liver, small intestine and colon.

Its subcellular location is the cell membrane. Functionally, regulatory subunit of the voltage-gated potassium (Kv) channel which, when coassembled with KCNB1, modulates the kinetics parameters of the heterotetrameric channel namely the time course of activation, deactivation and inactivation and on the voltage-dependence of activation. Potassium channel subunit that does not form functional channels by itself. Reduces the deactivation rate. Modulates the threshold for activation by shifting by approximately 20 mV in hyperpolarizing direction. Markedly changes the inactivation by shifting the voltage dependence of inactivation by approximately 40 mV in hyperpolarizing direction. Acceleratee activation and enhances the time course of activation. This Homo sapiens (Human) protein is Voltage-gated potassium channel regulatory subunit KCNG4.